Consider the following 100-residue polypeptide: Urease subunit gamma (100 aa).

The protein belongs to the urease gamma subunit family. As to quaternary structure, heterotrimer of UreA (gamma), UreB (beta) and UreC (alpha) subunits. Three heterotrimers associate to form the active enzyme.

The protein resides in the cytoplasm. The enzyme catalyses urea + 2 H2O + H(+) = hydrogencarbonate + 2 NH4(+). It functions in the pathway nitrogen metabolism; urea degradation; CO(2) and NH(3) from urea (urease route): step 1/1. This chain is Urease subunit gamma, found in Roseobacter denitrificans (strain ATCC 33942 / OCh 114) (Erythrobacter sp. (strain OCh 114)).